Reading from the N-terminus, the 308-residue chain is Tetraacyldisaccharide 4'-kinase (308 aa).

Ser-63–Thr-70 provides a ligand contact to ATP.

The protein belongs to the LpxK family.

The enzyme catalyses a lipid A disaccharide + ATP = a lipid IVA + ADP + H(+). It functions in the pathway glycolipid biosynthesis; lipid IV(A) biosynthesis; lipid IV(A) from (3R)-3-hydroxytetradecanoyl-[acyl-carrier-protein] and UDP-N-acetyl-alpha-D-glucosamine: step 6/6. In terms of biological role, transfers the gamma-phosphate of ATP to the 4'-position of a tetraacyldisaccharide 1-phosphate intermediate (termed DS-1-P) to form tetraacyldisaccharide 1,4'-bis-phosphate (lipid IVA). This is Tetraacyldisaccharide 4'-kinase from Campylobacter jejuni subsp. doylei (strain ATCC BAA-1458 / RM4099 / 269.97).